Reading from the N-terminus, the 62-residue chain is Sec-independent protein translocase protein TatA (62 aa).

The chain crosses the membrane as a helical span at residues 1-21; sequence MFGIGIPELLVIFVLILLVFG.

The protein belongs to the TatA/E family. The Tat system comprises two distinct complexes: a TatABC complex, containing multiple copies of TatA, TatB and TatC subunits, and a separate TatA complex, containing only TatA subunits. Substrates initially bind to the TatABC complex, which probably triggers association of the separate TatA complex to form the active translocon.

It localises to the cell inner membrane. Functionally, part of the twin-arginine translocation (Tat) system that transports large folded proteins containing a characteristic twin-arginine motif in their signal peptide across membranes. TatA could form the protein-conducting channel of the Tat system. This Oleidesulfovibrio alaskensis (strain ATCC BAA-1058 / DSM 17464 / G20) (Desulfovibrio alaskensis) protein is Sec-independent protein translocase protein TatA.